A 261-amino-acid chain; its full sequence is Glucosamine-6-phosphate deaminase (261 aa).

D67 acts as the Proton acceptor; for enolization step in catalysis. D136 acts as the For ring-opening step in catalysis. H138 functions as the Proton acceptor; for ring-opening step in the catalytic mechanism. E143 serves as the catalytic For ring-opening step.

The protein belongs to the glucosamine/galactosamine-6-phosphate isomerase family. NagB subfamily.

The enzyme catalyses alpha-D-glucosamine 6-phosphate + H2O = beta-D-fructose 6-phosphate + NH4(+). It functions in the pathway amino-sugar metabolism; N-acetylneuraminate degradation; D-fructose 6-phosphate from N-acetylneuraminate: step 5/5. Functionally, catalyzes the reversible isomerization-deamination of glucosamine 6-phosphate (GlcN6P) to form fructose 6-phosphate (Fru6P) and ammonium ion. This Beutenbergia cavernae (strain ATCC BAA-8 / DSM 12333 / CCUG 43141 / JCM 11478 / NBRC 16432 / NCIMB 13614 / HKI 0122) protein is Glucosamine-6-phosphate deaminase.